We begin with the raw amino-acid sequence, 722 residues long: Polyribonucleotide nucleotidyltransferase (722 aa).

2 residues coordinate Mg(2+): aspartate 505 and aspartate 511. In terms of domain architecture, KH spans 572–631 (PSITTIKIHPDKIRDVIGKGGATIRGICDETGASIDLDDDGNVKIYADNAAAAQAAVNRV). In terms of domain architecture, S1 motif spans 641–709 (GAIYKGRVER…NRGRVKLSMK (69 aa)).

This sequence belongs to the polyribonucleotide nucleotidyltransferase family. As to quaternary structure, component of the RNA degradosome, which is a multiprotein complex involved in RNA processing and mRNA degradation. Mg(2+) is required as a cofactor.

The protein localises to the cytoplasm. The catalysed reaction is RNA(n+1) + phosphate = RNA(n) + a ribonucleoside 5'-diphosphate. Its function is as follows. Involved in mRNA degradation. Catalyzes the phosphorolysis of single-stranded polyribonucleotides processively in the 3'- to 5'-direction. This Marinobacter nauticus (strain ATCC 700491 / DSM 11845 / VT8) (Marinobacter aquaeolei) protein is Polyribonucleotide nucleotidyltransferase.